The primary structure comprises 274 residues: Orotidine 5'-phosphate decarboxylase (274 aa).

The active-site Proton donor is lysine 95.

This sequence belongs to the OMP decarboxylase family. Type 2 subfamily.

It carries out the reaction orotidine 5'-phosphate + H(+) = UMP + CO2. It functions in the pathway pyrimidine metabolism; UMP biosynthesis via de novo pathway; UMP from orotate: step 2/2. The chain is Orotidine 5'-phosphate decarboxylase from Verminephrobacter eiseniae (strain EF01-2).